Consider the following 432-residue polypeptide: Short/branched chain specific acyl-CoA dehydrogenase, mitochondrial (432 aa).

The N-terminal 33 residues, 1 to 33 (MERATVRLLRGGALLRRNFPSCLSSWKTPPHAL), are a transit peptide targeting the mitochondrion. Lys-70 carries the N6-acetyllysine; alternate modification. The residue at position 70 (Lys-70) is an N6-succinyllysine; alternate. FAD contacts are provided by residues 174 to 183 (ICISETGAGS) and 207 to 209 (WIS). Residue Ser-183 participates in substrate binding. A Phosphoserine modification is found at Ser-183. Residues Tyr-229 and Tyr-283 each coordinate substrate. Lys-284 is subject to N6-acetyllysine; alternate. Lys-284 is subject to N6-succinyllysine; alternate. 291-294 (NEGR) is a substrate binding site. FAD-binding positions include Arg-319, Gln-330, and 387–391 (EWMGG). Residue Glu-414 is the Proton acceptor of the active site. Position 416 to 418 (416 to 418 (TSN)) interacts with FAD. The residue at position 426 (Lys-426) is an N6-acetyllysine.

Belongs to the acyl-CoA dehydrogenase family. In terms of assembly, homotetramer. Requires FAD as cofactor.

It is found in the mitochondrion matrix. The catalysed reaction is 2-methylbutanoyl-CoA + oxidized [electron-transfer flavoprotein] + H(+) = (2E)-2-methylbut-2-enoyl-CoA + reduced [electron-transfer flavoprotein]. It carries out the reaction (2S)-2-methylbutanoyl-CoA + oxidized [electron-transfer flavoprotein] + H(+) = (2E)-2-methylbut-2-enoyl-CoA + reduced [electron-transfer flavoprotein]. The enzyme catalyses (2R)-2-methylbutanoyl-CoA + oxidized [electron-transfer flavoprotein] + H(+) = ethylacryloyl-CoA + reduced [electron-transfer flavoprotein]. It catalyses the reaction butanoyl-CoA + oxidized [electron-transfer flavoprotein] + H(+) = (2E)-butenoyl-CoA + reduced [electron-transfer flavoprotein]. The catalysed reaction is 2-methylpropanoyl-CoA + oxidized [electron-transfer flavoprotein] + H(+) = 2-methylpropenoyl-CoA + reduced [electron-transfer flavoprotein]. It carries out the reaction hexanoyl-CoA + oxidized [electron-transfer flavoprotein] + H(+) = (2E)-hexenoyl-CoA + reduced [electron-transfer flavoprotein]. The enzyme catalyses valproyl-CoA + oxidized [electron-transfer flavoprotein] + H(+) = (2E)-2-propylpent-2-enoyl-CoA + reduced [electron-transfer flavoprotein]. Its pathway is lipid metabolism; mitochondrial fatty acid beta-oxidation. The protein operates within amino-acid degradation; L-isoleucine degradation. Functionally, short and branched chain specific acyl-CoA dehydrogenase that catalyzes the removal of one hydrogen from C-2 and C-3 of the fatty acyl-CoA thioester, resulting in the formation of trans-2-enoyl-CoA. Among the different mitochondrial acyl-CoA dehydrogenases, acts specifically on short and branched chain acyl-CoA derivatives such as (S)-2-methylbutyryl-CoA as well as short straight chain acyl-CoAs such as butyryl-CoA. Plays an important role in the metabolism of L-isoleucine by catalyzing the dehydrogenation of 2-methylbutyryl-CoA, one of the steps of the L-isoleucine catabolic pathway. Can also act on valproyl-CoA, a metabolite of the valproic acid drug. This chain is Short/branched chain specific acyl-CoA dehydrogenase, mitochondrial (ACADSB), found in Bos taurus (Bovine).